We begin with the raw amino-acid sequence, 591 residues long: Cineole synthase 1, chloroplastic (591 aa).

The transit peptide at 1–44 (MSSLIMQVVIPKPAKFFHNNLFSLSSKRHRFSTTTTTRGGRWAR) directs the protein to the chloroplast. The (2E)-geranyl diphosphate site is built by arginine 308, aspartate 345, aspartate 349, arginine 486, and aspartate 489. Mg(2+) is bound by residues aspartate 345 and aspartate 349. The DDXXD motif motif lies at 345-349 (DDVFD). Mg(2+) is bound by residues aspartate 489, threonine 493, and glutamate 497.

Belongs to the terpene synthase family. Tpsb subfamily. As to quaternary structure, monomer. It depends on Mg(2+) as a cofactor. The cofactor is Mn(2+).

Its subcellular location is the plastid. It is found in the chloroplast. It catalyses the reaction (2E)-geranyl diphosphate + H2O = 1,8-cineole + diphosphate. It carries out the reaction (2E)-geranyl diphosphate = alpha-pinene + diphosphate. The catalysed reaction is (2E)-geranyl diphosphate = beta-pinene + diphosphate. The enzyme catalyses (2E)-geranyl diphosphate + H2O = (S)-alpha-terpineol + diphosphate. It catalyses the reaction (2E)-geranyl diphosphate = beta-myrcene + diphosphate. It carries out the reaction (2E)-geranyl diphosphate = sabinene + diphosphate. Its pathway is secondary metabolite biosynthesis; terpenoid biosynthesis. Its function is as follows. Monoterpene synthase (TPS) involved in the biosynthesis of monoterpene natural products, components of the chemical defense arsenal. Catalyzes the conversion of (2E)-geranyl diphosphate (GPP) into 1,8-cineole, and, as minor products, alpha-terpineol, beta-pinene, alpha-pinene, sabinene and myrcene. In Salvia fruticosa (Greek sage), this protein is Cineole synthase 1, chloroplastic.